We begin with the raw amino-acid sequence, 581 residues long: Fibrous sheath-interacting protein 1 (581 aa).

Positions 1–77 are disordered; it reads MDIIKGNLDG…SNDDKQESCS (77 aa). The span at 14–30 shows a compositional bias: polar residues; it reads PASNSRIRPGSRSSNAS. Over residues 52 to 77 the composition is skewed to basic and acidic residues; that stretch reads GKEDHSESSNTENRRTSNDDKQESCS. Residue Ser87 is modified to Phosphoserine. Residues 105–153 are a coiled coil; sequence EPKLKELDSQLQDAIQKMKKLDKILAKKQRREKEIKKQGLEMRIKLWEE. 2 disordered regions span residues 338-365 and 555-581; these read SSFS…VTPG and HLKL…CKEP. 2 stretches are compositionally biased toward basic and acidic residues: residues 344–360 and 569–581; these read LENR…ERNM and QETK…CKEP.

This sequence belongs to the FSIP1 family.

The polypeptide is Fibrous sheath-interacting protein 1 (FSIP1) (Homo sapiens (Human)).